The sequence spans 151 residues: MAVTIDPKTFYANPPPGKPFYVRFEVPADVAEKALEVLSVAKQTGKIKKGTNEATKAVERGLAKLVLIAEDVDPPEVVAHLPLLCEEKKVPYVYVPSKEKLGKAAGINVSAAAAVVIEPGQAAGELEALVSKVNEIRAKNGLNAIPLPGRK.

This sequence belongs to the eukaryotic ribosomal protein eL8 family. As to quaternary structure, part of the 50S ribosomal subunit. Probably part of the RNase P complex.

It is found in the cytoplasm. In terms of biological role, multifunctional RNA-binding protein that recognizes the K-turn motif in ribosomal RNA, the RNA component of RNase P, box H/ACA, box C/D and box C'/D' sRNAs. The protein is Large ribosomal subunit protein eL8 of Pyrobaculum neutrophilum (strain DSM 2338 / JCM 9278 / NBRC 100436 / V24Sta) (Thermoproteus neutrophilus).